The primary structure comprises 926 residues: UvrABC system protein A (926 aa).

Residue 31-38 participates in ATP binding; the sequence is GPSGSGKS. The C4-type zinc finger occupies 251–278; sequence CPEHGFSIPELSARLFSFNSPYGACPSC. ABC transporter domains lie at 308–568 and 588–916; these read SGYF…PSSL and PSGK…KYLR. 620–627 contacts ATP; that stretch reads GVSGSGKS. The C4-type zinc finger occupies 719–745; the sequence is CEACQGEGVIKVEMHFLPPVYVTCEVC.

The protein belongs to the ABC transporter superfamily. UvrA family. Forms a heterotetramer with UvrB during the search for lesions.

The protein resides in the cytoplasm. In terms of biological role, the UvrABC repair system catalyzes the recognition and processing of DNA lesions. UvrA is an ATPase and a DNA-binding protein. A damage recognition complex composed of 2 UvrA and 2 UvrB subunits scans DNA for abnormalities. When the presence of a lesion has been verified by UvrB, the UvrA molecules dissociate. In Aquifex aeolicus (strain VF5), this protein is UvrABC system protein A.